Consider the following 519-residue polypeptide: GMP synthase [glutamine-hydrolyzing] (519 aa).

The Glutamine amidotransferase type-1 domain maps to alanine 4–aspartate 201. Cysteine 81 acts as the Nucleophile in catalysis. Active-site residues include histidine 175 and glutamate 177. The 193-residue stretch at tryptophan 202–arginine 394 folds into the GMPS ATP-PPase domain. Serine 229–serine 235 serves as a coordination point for ATP.

In terms of assembly, homodimer.

The enzyme catalyses XMP + L-glutamine + ATP + H2O = GMP + L-glutamate + AMP + diphosphate + 2 H(+). It participates in purine metabolism; GMP biosynthesis; GMP from XMP (L-Gln route): step 1/1. In terms of biological role, catalyzes the synthesis of GMP from XMP. In Nitrosomonas eutropha (strain DSM 101675 / C91 / Nm57), this protein is GMP synthase [glutamine-hydrolyzing].